The chain runs to 612 residues: Phosphoenolpyruvate carboxykinase [GTP] (612 aa).

Substrate-binding positions include Arg82 and 221 to 223 (YGG). The Mn(2+) site is built by Lys230 and His250. Position 272 (Ser272) interacts with substrate. A GTP-binding site is contributed by 273 to 278 (ACGKTN). Residue Cys274 is part of the active site. Asp297 lines the Mn(2+) pocket. Residue 388–390 (NSR) coordinates substrate. GTP-binding positions include Arg390, Arg421, and 516-519 (FGEN).

This sequence belongs to the phosphoenolpyruvate carboxykinase [GTP] family. As to quaternary structure, monomer. Mn(2+) serves as cofactor.

The protein resides in the cytoplasm. It catalyses the reaction oxaloacetate + GTP = phosphoenolpyruvate + GDP + CO2. The protein operates within carbohydrate biosynthesis; gluconeogenesis. Functionally, catalyzes the conversion of oxaloacetate (OAA) to phosphoenolpyruvate (PEP), the rate-limiting step in the metabolic pathway that produces glucose from lactate and other precursors derived from the citric acid cycle. The sequence is that of Phosphoenolpyruvate carboxykinase [GTP] from Corynebacterium efficiens (strain DSM 44549 / YS-314 / AJ 12310 / JCM 11189 / NBRC 100395).